The primary structure comprises 440 residues: Putative short-chain fatty acid transporter (440 aa).

Topologically, residues 1–19 (MIGRISRFMTRFVSRWLPD) are periplasmic. The chain crosses the membrane as a helical span at residues 20 to 40 (PLIFAMLLTLLTFVIALWLTP). Residues 41–53 (QTPISMVKMWGDG) lie on the Cytoplasmic side of the membrane. The chain crosses the membrane as a helical span at residues 54-74 (FWNLLAFGMQMALIIVTGHAL). Topologically, residues 75–102 (ASSAPVKSLLRTAASAAKTPVQGVMLVT) are periplasmic. Residues 103–123 (FFGSVACVINWGFGLVVGAMF) form a helical membrane-spanning segment. Residues 124 to 137 (AREVARRVPGSDYP) lie on the Cytoplasmic side of the membrane. 2 consecutive transmembrane segments (helical) span residues 138–158 (LLIA…SGSM) and 159–179 (PLLA…IPVG). Residue aspartate 180 is a topological domain, cytoplasmic. A helical transmembrane segment spans residues 181-201 (TLFSGFNIFITVALIVVMPFI). The Periplasmic portion of the chain corresponds to 202–244 (TRMMMPKPSDVVSIDPKLLMEEADFQKQLPKDAPPSERLEESR). The next 2 membrane-spanning stretches (helical) occupy residues 245–265 (ILTL…FSEH) and 266–286 (GFNI…LLLH). The Periplasmic portion of the chain corresponds to 287–313 (KTPMAYMRAISAAARSTAGILVQFPFY). Residues 314-334 (AGIQLMMEHSGLGGLITEFFI) traverse the membrane as a helical segment. Residues 335 to 351 (NVANKDTFPVMTFFSSA) are Cytoplasmic-facing. The chain crosses the membrane as a helical span at residues 352–372 (LINFAVPSGGGHWVIQGPFVI). The Periplasmic segment spans residues 373-394 (PAAQALGADLGKSVMAIAYGEQ). The helical transmembrane segment at 395-415 (WMNMAQPFWALPALAIAGLGV) threads the bilayer. Over 416-419 (RDIM) the chain is Cytoplasmic. Residues 420–440 (GYCITALLFSGVIFVIGLTLF) traverse the membrane as a helical segment.

It is found in the cell inner membrane. May be responsible for the uptake of short-chain fatty acids. The sequence is that of Putative short-chain fatty acid transporter (atoE) from Escherichia coli (strain K12).